We begin with the raw amino-acid sequence, 312 residues long: Tyrosine recombinase XerC (312 aa).

The 103-residue stretch at 1 to 103 folds into the Core-binding (CB) domain; that stretch reads MIASIYSFLD…SIKSFAHYCV (103 aa). The 183-residue stretch at 124–306 folds into the Tyr recombinase domain; sequence ELPSPMTYAQ…SVKLKKQTHQ (183 aa). Active-site residues include R164, K188, H258, R261, and H284. The O-(3'-phospho-DNA)-tyrosine intermediate role is filled by Y293.

Belongs to the 'phage' integrase family. XerC subfamily. Forms a cyclic heterotetrameric complex composed of two molecules of XerC and two molecules of XerD.

The protein resides in the cytoplasm. Site-specific tyrosine recombinase, which acts by catalyzing the cutting and rejoining of the recombining DNA molecules. The XerC-XerD complex is essential to convert dimers of the bacterial chromosome into monomers to permit their segregation at cell division. It also contributes to the segregational stability of plasmids. This is Tyrosine recombinase XerC from Chlamydia pneumoniae (Chlamydophila pneumoniae).